A 617-amino-acid chain; its full sequence is V-type proton ATPase catalytic subunit A (617 aa).

Position 250–257 (250–257) interacts with ATP; the sequence is GAFGCGKT.

Belongs to the ATPase alpha/beta chains family. V-ATPase is a heteromultimeric enzyme made up of two complexes: the ATP-hydrolytic V1 complex and the proton translocation V0 complex. The V1 complex consists of three catalytic AB heterodimers that form a heterohexamer, three peripheral stalks each consisting of EG heterodimers, one central rotor including subunits D and F, and the regulatory subunits C and H. The proton translocation complex V0 consists of the proton transport subunit a, a ring of proteolipid subunits c9c'', rotary subunit d, subunits e and f, and the accessory subunits VhaAC45 and ATP6AP2.

It carries out the reaction ATP + H2O + 4 H(+)(in) = ADP + phosphate + 5 H(+)(out). With respect to regulation, ATP hydrolysis occurs at the interface between the nucleotide-binding domains of subunits A and B. ATP hydrolysis triggers a conformational change in the subunits D and F, which induces a shift of subunit d. The c-ring is subsequently rotated and results in a continuous proton translocation across the membrane. Functionally, catalytic subunit of the V1 complex of vacuolar(H+)-ATPase (V-ATPase), a multisubunit enzyme composed of a peripheral complex (V1) that hydrolyzes ATP and a membrane integral complex (V0) that translocates protons. V-ATPase is responsible for acidifying and maintaining the pH of intracellular compartments and in some cell types, is targeted to the plasma membrane, where it is responsible for acidifying the extracellular environment. This is V-type proton ATPase catalytic subunit A (VHAA) from Manduca sexta (Tobacco hawkmoth).